Consider the following 277-residue polypeptide: Energy-coupling factor transporter ATP-binding protein EcfA1 (277 aa).

Residues 5–242 (VKVNNISFEY…IKMLKEIGLD (238 aa)) enclose the ABC transporter domain. 41–48 (GHNGSGKS) provides a ligand contact to ATP.

Belongs to the ABC transporter superfamily. Energy-coupling factor EcfA family. As to quaternary structure, forms a stable energy-coupling factor (ECF) transporter complex composed of 2 membrane-embedded substrate-binding proteins (S component), 2 ATP-binding proteins (A component) and 2 transmembrane proteins (T component).

The protein resides in the cell membrane. In terms of biological role, ATP-binding (A) component of a common energy-coupling factor (ECF) ABC-transporter complex. Unlike classic ABC transporters this ECF transporter provides the energy necessary to transport a number of different substrates. This is Energy-coupling factor transporter ATP-binding protein EcfA1 from Clostridioides difficile (strain 630) (Peptoclostridium difficile).